Consider the following 208-residue polypeptide: MIAFVSGPVAALAPTTAVIEVGGIGMAVQCTPHTLADLRVGREARLATSLVVREDSLTLYGFANDDERQVFELLQTASGVGPRLAQAMLATHSPDALRLAVSTGDEKALTAVSGIGKKGAQKLLLELKDRLGEPVGAHIGQQGIGTPVTSGWRDQLQAALIGLGYASREADEAVNAVAPQAEAAVAEGTAPPVPQLLRAALQTLNRAR.

Residues 1–63 (MIAFVSGPVA…EDSLTLYGFA (63 aa)) form a domain I region. Residues 64–142 (NDDERQVFEL…EPVGAHIGQQ (79 aa)) form a domain II region. The interval 143–147 (GIGTP) is flexible linker. The segment at 148–208 (VTSGWRDQLQ…AALQTLNRAR (61 aa)) is domain III.

It belongs to the RuvA family. In terms of assembly, homotetramer. Forms an RuvA(8)-RuvB(12)-Holliday junction (HJ) complex. HJ DNA is sandwiched between 2 RuvA tetramers; dsDNA enters through RuvA and exits via RuvB. An RuvB hexamer assembles on each DNA strand where it exits the tetramer. Each RuvB hexamer is contacted by two RuvA subunits (via domain III) on 2 adjacent RuvB subunits; this complex drives branch migration. In the full resolvosome a probable DNA-RuvA(4)-RuvB(12)-RuvC(2) complex forms which resolves the HJ.

It localises to the cytoplasm. The RuvA-RuvB-RuvC complex processes Holliday junction (HJ) DNA during genetic recombination and DNA repair, while the RuvA-RuvB complex plays an important role in the rescue of blocked DNA replication forks via replication fork reversal (RFR). RuvA specifically binds to HJ cruciform DNA, conferring on it an open structure. The RuvB hexamer acts as an ATP-dependent pump, pulling dsDNA into and through the RuvAB complex. HJ branch migration allows RuvC to scan DNA until it finds its consensus sequence, where it cleaves and resolves the cruciform DNA. The polypeptide is Holliday junction branch migration complex subunit RuvA (Streptomyces griseus subsp. griseus (strain JCM 4626 / CBS 651.72 / NBRC 13350 / KCC S-0626 / ISP 5235)).